The sequence spans 399 residues: MSKTIAINAGSSSLKWQLYQMPEEKVLAQGIIERIGLTDSISTVKYDGKKEEHILDIPDHTEAVKRLLNDLIHFGIIGTYDEITGVGHRIVAGGEYFKESVVVDDKVVEQVEELAALAPLHNPGAAAGIRAFRKILPDITSVCVFDTSFHTTMQKHTYLYPIPQKYYTDYKVRKYGAHGTSHKYVAEEAAKMLGRPLDELKLITAHVGNGVSITANYHGQSVDTSMGFTPLAGPMMGTRSGDIDPAIIPYLIAQDPELKDAADVVNMLNKQSGLGGVSGISSDMRDIEAGLQANNPDAVLAYNIFIDRIKKFIGQYFAVLNGADALVFTAGMGENAPLMRQDVVNGLSWFGMEIDPEKNVFGYRGDISTAASKVKVLVVSTDEELCIARDVERLKQTIS.

A Mg(2+)-binding site is contributed by Asn-8. Lys-15 is an ATP binding site. Arg-89 lines the substrate pocket. Asp-146 (proton donor/acceptor) is an active-site residue. ATP is bound by residues 206–210 (HVGNG), 283–285 (DMR), and 331–335 (GMGEN). Glu-383 is a binding site for Mg(2+).

Belongs to the acetokinase family. Homodimer. The cofactor is Mg(2+). Mn(2+) serves as cofactor.

The protein localises to the cytoplasm. The enzyme catalyses acetate + ATP = acetyl phosphate + ADP. Its pathway is metabolic intermediate biosynthesis; acetyl-CoA biosynthesis; acetyl-CoA from acetate: step 1/2. Functionally, catalyzes the formation of acetyl phosphate from acetate and ATP. Can also catalyze the reverse reaction. The polypeptide is Acetate kinase (Streptococcus equi subsp. zooepidemicus (strain H70)).